A 170-amino-acid polypeptide reads, in one-letter code: MATPAGGRPSQPQPQAQQLSVDFEALSYISSLVEAFQAFDSDNDGLVTAPELRGLLASLGLDKPEHEVRDMLARADADRDGKLSVEELLDVMNAGQLGLGALGALLQSAVPALESAAGPDGVLGADELARLLSVMGTASVEDCMEIIACMDGDGDGAISVEEFRLMAQLL.

3 consecutive EF-hand domains span residues 27–62, 63–98, and 138–170; these read SYISSLVEAFQAFDSDNDGLVTAPELRGLLASLGLD, KPEHEVRDMLARADADRDGKLSVEELLDVMNAGQLG, and ASVEDCMEIIACMDGDGDGAISVEEFRLMAQLL. Aspartate 40, aspartate 42, aspartate 44, glutamate 51, aspartate 76, aspartate 78, aspartate 80, lysine 82, glutamate 87, aspartate 151, aspartate 153, aspartate 155, and glutamate 162 together coordinate Ca(2+).

Its function is as follows. Potential calcium sensor. The sequence is that of Probable calcium-binding protein CML29 (CML29) from Oryza sativa subsp. japonica (Rice).